Reading from the N-terminus, the 266-residue chain is Dihydropteroate synthase (266 aa).

The Pterin-binding domain maps to 12–260; the sequence is AAIMGILNVT…DVKANQDIVA (249 aa). Residue asparagine 19 coordinates Mg(2+). Residues threonine 59, aspartate 93, asparagine 112, aspartate 176, lysine 212, and 248-250 contribute to the (7,8-dihydropterin-6-yl)methyl diphosphate site; that span reads RVH.

It belongs to the DHPS family. As to quaternary structure, homodimer or homotrimer. It depends on Mg(2+) as a cofactor.

It carries out the reaction (7,8-dihydropterin-6-yl)methyl diphosphate + 4-aminobenzoate = 7,8-dihydropteroate + diphosphate. Its pathway is cofactor biosynthesis; tetrahydrofolate biosynthesis; 7,8-dihydrofolate from 2-amino-4-hydroxy-6-hydroxymethyl-7,8-dihydropteridine diphosphate and 4-aminobenzoate: step 1/2. Catalyzes the condensation of para-aminobenzoate (pABA) with 6-hydroxymethyl-7,8-dihydropterin diphosphate (DHPt-PP) to form 7,8-dihydropteroate (H2Pte), the immediate precursor of folate derivatives. The protein is Dihydropteroate synthase (folP) of Streptococcus pyogenes serotype M6 (strain ATCC BAA-946 / MGAS10394).